The sequence spans 87 residues: Small polypeptide DEVIL 11 (87 aa).

The span at 1–11 (MASSSSLTRSG) shows a compositional bias: polar residues. Residues 1–47 (MASSSSLTRSGSVHLDEKWKLSKKDGGASRITRSSSTSSSSFNGKKQ) form a disordered region. The segment covering 14–27 (HLDEKWKLSKKDGG) has biased composition (basic and acidic residues). Residues 29 to 41 (SRITRSSSTSSSS) are compositionally biased toward low complexity. A required for DVL/RTFL small polypeptide activity region spans residues 51–82 (AFTRKCARLVKEQRARFYIMRRCVIMLICWRD). Residues 64 to 80 (RARFYIMRRCVIMLICW) form a helical membrane-spanning segment. An N-linked (GlcNAc...) asparagine glycan is attached at Asn83.

This sequence belongs to the DVL/RTFL small polypeptides family.

Its subcellular location is the cell membrane. Functionally, small polypeptide acting as a regulatory molecule which coordinates cellular responses required for differentiation, growth and development, probably by restricting polar cell proliferation in lateral organs and coordinating socket cell recruitment and differentiation at trichome sites. The chain is Small polypeptide DEVIL 11 from Arabidopsis thaliana (Mouse-ear cress).